A 178-amino-acid polypeptide reads, in one-letter code: Bifunctional protein PyrR (178 aa).

The PRPP-binding signature appears at 99 to 111 (VILVDDVLFTGRT).

Belongs to the purine/pyrimidine phosphoribosyltransferase family. PyrR subfamily. Homodimer and homohexamer; in equilibrium.

It carries out the reaction UMP + diphosphate = 5-phospho-alpha-D-ribose 1-diphosphate + uracil. Functionally, regulates transcriptional attenuation of the pyrimidine nucleotide (pyr) operon by binding in a uridine-dependent manner to specific sites on pyr mRNA. This disrupts an antiterminator hairpin in the RNA and favors formation of a downstream transcription terminator, leading to a reduced expression of downstream genes. Also displays a weak uracil phosphoribosyltransferase activity which is not physiologically significant. The protein is Bifunctional protein PyrR of Limosilactobacillus reuteri subsp. reuteri (strain JCM 1112) (Lactobacillus reuteri).